A 142-amino-acid chain; its full sequence is MAAMTVQLDIVSAENSIFSGLVAHLQVTGSEGDLGVMPGHAPLLTNIKPGMARIVKQDGKEEVFYLSGGILEVQPSSVSVLADVVKRADEIDEKAAEEAKRRAESAMADAGADFNYAAAANELAQAVAQLRVVDTIKKNIAR.

This sequence belongs to the ATPase epsilon chain family. F-type ATPases have 2 components, CF(1) - the catalytic core - and CF(0) - the membrane proton channel. CF(1) has five subunits: alpha(3), beta(3), gamma(1), delta(1), epsilon(1). CF(0) has three main subunits: a, b and c.

It is found in the cell inner membrane. Produces ATP from ADP in the presence of a proton gradient across the membrane. This chain is ATP synthase epsilon chain, found in Shewanella woodyi (strain ATCC 51908 / MS32).